We begin with the raw amino-acid sequence, 570 residues long: Sulfite reductase [NADPH] hemoprotein beta-component (570 aa).

Residues Cys434, Cys440, Cys479, and Cys483 each contribute to the [4Fe-4S] cluster site. Residue Cys483 coordinates siroheme.

Belongs to the nitrite and sulfite reductase 4Fe-4S domain family. In terms of assembly, alpha(8)-beta(8). The alpha component is a flavoprotein, the beta component is a hemoprotein. Requires siroheme as cofactor. [4Fe-4S] cluster serves as cofactor.

It carries out the reaction hydrogen sulfide + 3 NADP(+) + 3 H2O = sulfite + 3 NADPH + 4 H(+). Its pathway is sulfur metabolism; hydrogen sulfide biosynthesis; hydrogen sulfide from sulfite (NADPH route): step 1/1. Its function is as follows. Component of the sulfite reductase complex that catalyzes the 6-electron reduction of sulfite to sulfide. This is one of several activities required for the biosynthesis of L-cysteine from sulfate. This is Sulfite reductase [NADPH] hemoprotein beta-component from Klebsiella pneumoniae subsp. pneumoniae (strain ATCC 700721 / MGH 78578).